Here is a 115-residue protein sequence, read N- to C-terminus: MLSRKATAILLVVHAAAMLASQTEGFVPIFTYGEVQRMQEKERYKGQKKSLSVQQRSEEVGPVDPAEPREEKQEVIKLTAPVEIGMRMNSRQLEKYQATLEGLLRKALPSSRNAQ.

A signal peptide spans methionine 1–glycine 25. A disordered region spans residues arginine 43–glutamine 73.

The protein belongs to the motilin family.

It localises to the secreted. Functionally, plays an important role in the regulation of interdigestive gastrointestinal motility and indirectly causes rhythmic contraction of duodenal and colonic smooth muscle. The sequence is that of Promotilin (MLN) from Ovis aries (Sheep).